The following is a 129-amino-acid chain: Small ribosomal subunit protein uS11 (129 aa).

This sequence belongs to the universal ribosomal protein uS11 family. Part of the 30S ribosomal subunit. Interacts with proteins S7 and S18. Binds to IF-3.

Functionally, located on the platform of the 30S subunit, it bridges several disparate RNA helices of the 16S rRNA. Forms part of the Shine-Dalgarno cleft in the 70S ribosome. This chain is Small ribosomal subunit protein uS11, found in Nitratidesulfovibrio vulgaris (strain DSM 19637 / Miyazaki F) (Desulfovibrio vulgaris).